The following is a 459-amino-acid chain: Phosphoglucosamine mutase (459 aa).

Ser102 functions as the Phosphoserine intermediate in the catalytic mechanism. Mg(2+) is bound by residues Ser102, Asp243, Asp245, and Asp247. Ser102 is modified (phosphoserine).

It belongs to the phosphohexose mutase family. The cofactor is Mg(2+). Activated by phosphorylation.

It catalyses the reaction alpha-D-glucosamine 1-phosphate = D-glucosamine 6-phosphate. Catalyzes the conversion of glucosamine-6-phosphate to glucosamine-1-phosphate. This chain is Phosphoglucosamine mutase, found in Bartonella quintana (strain Toulouse) (Rochalimaea quintana).